A 120-amino-acid polypeptide reads, in one-letter code: Large ribosomal subunit protein uL18 (120 aa).

The protein belongs to the universal ribosomal protein uL18 family. Part of the 50S ribosomal subunit; part of the 5S rRNA/L5/L18/L25 subcomplex. Contacts the 5S and 23S rRNAs.

This is one of the proteins that bind and probably mediate the attachment of the 5S RNA into the large ribosomal subunit, where it forms part of the central protuberance. The polypeptide is Large ribosomal subunit protein uL18 (Hyphomonas neptunium (strain ATCC 15444)).